Reading from the N-terminus, the 230-residue chain is Sugar fermentation stimulation protein homolog (230 aa).

It belongs to the SfsA family.

This Clostridium botulinum (strain 657 / Type Ba4) protein is Sugar fermentation stimulation protein homolog.